The sequence spans 736 residues: Oxysterol-binding protein-related protein 9 (736 aa).

N-acetylalanine is present on alanine 2. The PH domain maps to 2 to 99; that stretch reads ASIVEGPLSK…WIHALEETIL (98 aa). Residues 209–368 are disordered; sequence LEPVISTMPS…RDDDGEAGSV (160 aa). Over residues 253 to 274 the composition is skewed to low complexity; it reads TPTPNSTGSGNSPPSSSLTPPS. 5 positions are modified to phosphoserine: serine 306, serine 324, serine 325, serine 326, and serine 329. 2 stretches are compositionally biased toward polar residues: residues 314–329 and 336–348; these read SSGSASVLTHSSSGNS and TESLNSSMSNGTS. Serine 611 is modified (phosphoserine).

The protein belongs to the OSBP family. Heterodimer with OSBPL11. Interacts with OSBPL10.

The protein resides in the late endosome membrane. It localises to the golgi apparatus. It is found in the trans-Golgi network membrane. It carries out the reaction a 1,2-diacyl-sn-glycero-3-phospho-(1D-myo-inositol 4-phosphate)(out) + a 1,2-diacyl-sn-glycero-3-phospho-L-serine(in) = a 1,2-diacyl-sn-glycero-3-phospho-(1D-myo-inositol 4-phosphate)(in) + a 1,2-diacyl-sn-glycero-3-phospho-L-serine(out). Functionally, interacts with OSBPL11 to function as lipid transfer proteins. Together they form a heterodimer that localizes at the ER-trans-Golgi membrane contact sites, and exchanges phosphatidylserine (1,2-diacyl-sn-glycero-3-phospho-L-serine, PS) for phosphatidylinositol-4-phosphate (1,2-diacyl-sn-glycero-3-phospho-(1D-myo-inositol 4-phosphate), PI(4)P) between the two organelles, a step that is critical for sphingomyelin synthesis in the Golgi complex. The protein is Oxysterol-binding protein-related protein 9 (Osbpl9) of Mus musculus (Mouse).